A 1494-amino-acid chain; its full sequence is DNA-directed RNA polymerase subunit beta' (1494 aa).

Zn(2+)-binding residues include cysteine 67, cysteine 69, cysteine 82, and cysteine 85. Positions 499, 501, and 503 each coordinate Mg(2+). Zn(2+) is bound by residues cysteine 868, cysteine 944, cysteine 951, and cysteine 954.

The protein belongs to the RNA polymerase beta' chain family. In terms of assembly, the RNAP catalytic core consists of 2 alpha, 1 beta, 1 beta' and 1 omega subunit. When a sigma factor is associated with the core the holoenzyme is formed, which can initiate transcription. Mg(2+) serves as cofactor. Zn(2+) is required as a cofactor.

It catalyses the reaction RNA(n) + a ribonucleoside 5'-triphosphate = RNA(n+1) + diphosphate. Its function is as follows. DNA-dependent RNA polymerase catalyzes the transcription of DNA into RNA using the four ribonucleoside triphosphates as substrates. The polypeptide is DNA-directed RNA polymerase subunit beta' (Chlorobaculum parvum (strain DSM 263 / NCIMB 8327) (Chlorobium vibrioforme subsp. thiosulfatophilum)).